The chain runs to 428 residues: C4-dicarboxylate transport protein (428 aa).

Helical transmembrane passes span 8-28, 44-64, 78-98, 148-168, 184-204, 222-242, 307-327, and 355-375; these read VLYVQVIFAIVVGVLLGHLYP, LIKMVIGPIIFCTVVTGIAGM, LLYFEIVSTFALVLGLAATHI, GEILQILLIALLFGSVLAHLG, VLFGIVHIVTKLAPVGAFGAM, LIGTFYLTSVVFVLVVLGAIA, IYMTMAVLFIAQATNIELTWM, and AATLAVVPTIPLSGMVLILGI.

The protein belongs to the dicarboxylate/amino acid:cation symporter (DAACS) (TC 2.A.23) family.

It localises to the cell inner membrane. Its function is as follows. Responsible for the transport of dicarboxylates such as succinate, fumarate, and malate from the periplasm across the membrane. The polypeptide is C4-dicarboxylate transport protein (Burkholderia thailandensis (strain ATCC 700388 / DSM 13276 / CCUG 48851 / CIP 106301 / E264)).